Reading from the N-terminus, the 101-residue chain is A-type ATP synthase subunit F (101 aa).

Belongs to the V-ATPase F subunit family. Has multiple subunits with at least A(3), B(3), C, D, E, F, H, I and proteolipid K(x).

It is found in the cell membrane. Component of the A-type ATP synthase that produces ATP from ADP in the presence of a proton gradient across the membrane. The protein is A-type ATP synthase subunit F of Methanosarcina acetivorans (strain ATCC 35395 / DSM 2834 / JCM 12185 / C2A).